Here is a 179-residue protein sequence, read N- to C-terminus: Large ribosomal subunit protein uL5 (179 aa).

It belongs to the universal ribosomal protein uL5 family. As to quaternary structure, part of the 50S ribosomal subunit; part of the 5S rRNA/L5/L18/L25 subcomplex. Contacts the 5S rRNA and the P site tRNA. Forms a bridge to the 30S subunit in the 70S ribosome.

Functionally, this is one of the proteins that bind and probably mediate the attachment of the 5S RNA into the large ribosomal subunit, where it forms part of the central protuberance. In the 70S ribosome it contacts protein S13 of the 30S subunit (bridge B1b), connecting the 2 subunits; this bridge is implicated in subunit movement. Contacts the P site tRNA; the 5S rRNA and some of its associated proteins might help stabilize positioning of ribosome-bound tRNAs. This is Large ribosomal subunit protein uL5 from Salmonella agona (strain SL483).